A 184-amino-acid chain; its full sequence is MAEEEFAELGSDRSLLLVDDDNAFLTRLARAMEKRGFQTEIAETVSAGKAIVQNRAPAYAVIDLRLEDGNGLEVVEALRERRPEARIVVLTGYGAIATAVAAVKMGATDYLSKPADANDITNALLAKGEALPPPPENPMSADRVRWEHIQRVYELCDRNVSETARRLNMHRRTLQRILAKRSPR.

Residues 14–128 (SLLLVDDDNA…DITNALLAKG (115 aa)) form the Response regulatory domain. Residue Asp-63 is modified to 4-aspartylphosphate.

In terms of processing, phosphorylated by RegB.

Functionally, member of the two-component regulatory system RegB/RegA. Involved in transactivating anaerobic expression of the photosynthetic apparatus. It is a transcriptional regulator that is responsible for activating expression of the puf, puh, and puc operons in response to a decrease in oxygen tension. The polypeptide is Photosynthetic apparatus regulatory protein RegA (regA) (Rhodobacter capsulatus (Rhodopseudomonas capsulata)).